We begin with the raw amino-acid sequence, 414 residues long: Glucose-1-phosphate adenylyltransferase (414 aa).

Alpha-D-glucose 1-phosphate contacts are provided by residues Tyr-103, Gly-168, 183–184 (EK), and Ser-201.

This sequence belongs to the bacterial/plant glucose-1-phosphate adenylyltransferase family. As to quaternary structure, homotetramer.

It catalyses the reaction alpha-D-glucose 1-phosphate + ATP + H(+) = ADP-alpha-D-glucose + diphosphate. Its pathway is glycan biosynthesis; glycogen biosynthesis. Its function is as follows. Involved in the biosynthesis of ADP-glucose, a building block required for the elongation reactions to produce glycogen. Catalyzes the reaction between ATP and alpha-D-glucose 1-phosphate (G1P) to produce pyrophosphate and ADP-Glc. The sequence is that of Glucose-1-phosphate adenylyltransferase from Thermus caldophilus.